Here is a 507-residue protein sequence, read N- to C-terminus: Dolichyl pyrophosphate Man9GlcNAc2 alpha-1,3-glucosyltransferase (507 aa).

At 1–2 (ME) the chain is on the cytoplasmic side. The chain crosses the membrane as a helical span at residues 3–23 (SWTWMTVVVLLGLTVRWTVSL). Residues 24–114 (NSYSGAGKPP…SQAHKLFMRT (91 aa)) lie on the Lumenal side of the membrane. N-linked (GlcNAc...) asparagine glycosylation is present at Asn-59. Residues 115–135 (TVLAADLLIYIPAVLLYCYSL) form a helical membrane-spanning segment. At 136-143 (KEISPKRK) the chain is on the cytoplasmic side. Residues 144 to 164 (IASALCILLYPGLILIDYGHF) traverse the membrane as a helical segment. Topologically, residues 165-172 (QYNSVSLG) are lumenal. A helical transmembrane segment spans residues 173–193 (FALWGVLGVSCDWDLLGSLAF). Residues 194 to 229 (CLALNYKQMELYHSLPFFCFLLGKCFKKGLRGKGSA) lie on the Cytoplasmic side of the membrane. The helical transmembrane segment at 230–250 (LFIRIACTVVASFLLCWLPFL) threads the bilayer. Residues 251-297 (TEREHALQVVRRLFPVDRGLFEDKVANIWCSLNVFLKIKDILPRHIQ) are Lumenal-facing. Residues 298–318 (IAISFCFTFLSLLPACIKLTV) traverse the membrane as a helical segment. The Cytoplasmic portion of the chain corresponds to 319-332 (QPSAKGFRFTLVSC). A helical membrane pass occupies residues 333–353 (ALSFFLFSFQVHEKSILLVSL). Over 354 to 361 (PVCLVLTE) the chain is Lumenal. The chain crosses the membrane as a helical span at residues 362 to 382 (IPFMSTWFLLVSTFSMLPLLL). At 383–385 (KDQ) the chain is on the cytoplasmic side. A helical transmembrane segment spans residues 386 to 406 (LLLPSVVTVMAFLIACSTFFP). The Lumenal segment spans residues 407–437 (MFENTSEEQLQLKSFAVSVRRHLPGFTFLPR). A helical membrane pass occupies residues 438-458 (IIQCLFLSSVITMILLTILSV). Topologically, residues 459-468 (TLDPPQKLPD) are cytoplasmic. Residues 469–489 (LFSVLICFVSCVNFVFFLVYF) traverse the membrane as a helical segment. Residues 490 to 507 (NIVIMWDSKNGRNRKKID) are Lumenal-facing.

The protein belongs to the ALG6/ALG8 glucosyltransferase family.

Its subcellular location is the endoplasmic reticulum membrane. It catalyses the reaction an alpha-D-Man-(1-&gt;2)-alpha-D-Man-(1-&gt;2)-alpha-D-Man-(1-&gt;3)-[alpha-D-Man-(1-&gt;2)-alpha-D-Man-(1-&gt;3)-[alpha-D-Man-(1-&gt;2)-alpha-D-Man-(1-&gt;6)]-alpha-D-Man-(1-&gt;6)]-beta-D-Man-(1-&gt;4)-beta-D-GlcNAc-(1-&gt;4)-alpha-D-GlcNAc-diphospho-di-trans,poly-cis-dolichol + a di-trans,poly-cis-dolichyl beta-D-glucosyl phosphate = an alpha-D-Glc-(1-&gt;3)-alpha-D-Man-(1-&gt;2)-alpha-D-Man-(1-&gt;2)-alpha-D-Man-(1-&gt;3)-[alpha-D-Man-(1-&gt;2)-alpha-D-Man-(1-&gt;3)-[alpha-D-Man-(1-&gt;2)-alpha-D-Man-(1-&gt;6)]-alpha-D-Man-(1-&gt;6)]-beta-D-Man-(1-&gt;4)-beta-D-GlcNAc-(1-&gt;4)-alpha-D-GlcNAc-diphospho-di-trans,poly-cis-dolichol + a di-trans,poly-cis-dolichyl phosphate + H(+). It functions in the pathway protein modification; protein glycosylation. Dolichyl pyrophosphate Man9GlcNAc2 alpha-1,3-glucosyltransferase that operates in the biosynthetic pathway of dolichol-linked oligosaccharides, the glycan precursors employed in protein asparagine (N)-glycosylation. The assembly of dolichol-linked oligosaccharides begins on the cytosolic side of the endoplasmic reticulum membrane and finishes in its lumen. The sequential addition of sugars to dolichol pyrophosphate produces dolichol-linked oligosaccharides containing fourteen sugars, including two GlcNAcs, nine mannoses and three glucoses. Once assembled, the oligosaccharide is transferred from the lipid to nascent proteins by oligosaccharyltransferases. In the lumen of the endoplasmic reticulum, adds the first glucose residue from dolichyl phosphate glucose (Dol-P-Glc) onto the lipid-linked oligosaccharide intermediate Man(9)GlcNAc(2)-PP-Dol to produce Glc(1)Man(9)GlcNAc(2)-PP-Dol. Glc(1)Man(9)GlcNAc(2)-PP-Dol is a substrate for ALG8, the following enzyme in the biosynthetic pathway. The sequence is that of Dolichyl pyrophosphate Man9GlcNAc2 alpha-1,3-glucosyltransferase from Rattus norvegicus (Rat).